We begin with the raw amino-acid sequence, 362 residues long: UDP-3-O-acylglucosamine N-acyltransferase (362 aa).

The active-site Proton acceptor is H251.

The protein belongs to the transferase hexapeptide repeat family. LpxD subfamily. In terms of assembly, homotrimer.

It catalyses the reaction a UDP-3-O-[(3R)-3-hydroxyacyl]-alpha-D-glucosamine + a (3R)-hydroxyacyl-[ACP] = a UDP-2-N,3-O-bis[(3R)-3-hydroxyacyl]-alpha-D-glucosamine + holo-[ACP] + H(+). Its pathway is bacterial outer membrane biogenesis; LPS lipid A biosynthesis. In terms of biological role, catalyzes the N-acylation of UDP-3-O-acylglucosamine using 3-hydroxyacyl-ACP as the acyl donor. Is involved in the biosynthesis of lipid A, a phosphorylated glycolipid that anchors the lipopolysaccharide to the outer membrane of the cell. This chain is UDP-3-O-acylglucosamine N-acyltransferase, found in Cupriavidus pinatubonensis (strain JMP 134 / LMG 1197) (Cupriavidus necator (strain JMP 134)).